The following is a 62-amino-acid chain: HSEGTFTSDYSKYMDNRRAKDFVQWLMSTKRNGHAEGTYTSDVDSLSDYFKAKRFVDSLKSY.

The protein belongs to the glucagon family.

It localises to the secreted. Its function is as follows. Promotes hydrolysis of glycogen and lipids, and raises the blood sugar level. The sequence is that of Glucagon (gcg) from Scyliorhinus canicula (Small-spotted catshark).